The following is a 248-amino-acid chain: Probable transcriptional regulatory protein Syncc9902_0542 (248 aa).

It belongs to the TACO1 family.

Its subcellular location is the cytoplasm. This is Probable transcriptional regulatory protein Syncc9902_0542 from Synechococcus sp. (strain CC9902).